The primary structure comprises 516 residues: GMP synthase [glutamine-hydrolyzing] (516 aa).

The 195-residue stretch at 5–199 (SIIVLDFGSQ…ARNICGVTEK (195 aa)) folds into the Glutamine amidotransferase type-1 domain. Cys82 (nucleophile) is an active-site residue. Residues His173 and Glu175 contribute to the active site. Positions 200 to 391 (WKMEHFLKEQ…LGLPESMINR (192 aa)) constitute a GMPS ATP-PPase domain. Position 227 to 233 (227 to 233 (SGGVDSS)) interacts with ATP.

As to quaternary structure, homodimer.

The enzyme catalyses XMP + L-glutamine + ATP + H2O = GMP + L-glutamate + AMP + diphosphate + 2 H(+). It functions in the pathway purine metabolism; GMP biosynthesis; GMP from XMP (L-Gln route): step 1/1. Functionally, catalyzes the synthesis of GMP from XMP. The polypeptide is GMP synthase [glutamine-hydrolyzing] (Sulfurimonas denitrificans (strain ATCC 33889 / DSM 1251) (Thiomicrospira denitrificans (strain ATCC 33889 / DSM 1251))).